The primary structure comprises 396 residues: Growth-regulating factor 1 (396 aa).

The QLQ domain maps to 18–53; that stretch reads PFTASQWQELEHQALIYKYMASGTPIPSDLILPLRR. 2 consecutive short sequence motifs (bipartite nuclear localization signal) follow at residues 86–105 and 123–130; these read RKAEDPEPGRCRRTDGKKWR and RGKNRSRK. A WRC domain is found at 90–134; the sequence is DPEPGRCRRTDGKKWRCSKEAYPDSKYCEKHMHRGKNRSRKPVEM. Residues 117-176 form a disordered region; it reads CEKHMHRGKNRSRKPVEMSLATPPPPSSSATSAASNSSAGVAPTTTTTSSPAPSYSRPAP. Positions 120–129 are enriched in basic residues; the sequence is HMHRGKNRSR. Over residues 144-174 the composition is skewed to low complexity; the sequence is SSATSAASNSSAGVAPTTTTTSSPAPSYSRP.

Belongs to the GRF family. Highly expressed in the intercalary meristem of the internode and in the shoot apex. Detected in the leaf primordia and emerging leaves in the uppermost node. Preferentially localized in the epidermis and in the tissues surrounding vascular bundles of the intercalary meristem of the internode and in adventitious roots of the second highest node. Low expression in the coleoptile and in the youngest leaf.

It localises to the nucleus. Transcription activator that plays a regulatory role in gibberellin-induced stem elongation. In Oryza sativa subsp. indica (Rice), this protein is Growth-regulating factor 1 (GRF1).